The chain runs to 185 residues: Ribosome-recycling factor (185 aa).

It belongs to the RRF family.

The protein localises to the cytoplasm. In terms of biological role, responsible for the release of ribosomes from messenger RNA at the termination of protein biosynthesis. May increase the efficiency of translation by recycling ribosomes from one round of translation to another. The protein is Ribosome-recycling factor of Pectobacterium atrosepticum (strain SCRI 1043 / ATCC BAA-672) (Erwinia carotovora subsp. atroseptica).